We begin with the raw amino-acid sequence, 330 residues long: tRNA dimethylallyltransferase (330 aa).

Positions 1-11 (MDYSHSDSPST) are enriched in polar residues. A disordered region spans residues 1 to 21 (MDYSHSDSPSTAPAGKTPVDQ). 29–36 (GPTGAGKS) is a binding site for ATP. Position 31–36 (31–36 (TGAGKS)) interacts with substrate. Residues 56–59 (DSMQ) form an interaction with substrate tRNA region.

The protein belongs to the IPP transferase family. Monomer. The cofactor is Mg(2+).

The catalysed reaction is adenosine(37) in tRNA + dimethylallyl diphosphate = N(6)-dimethylallyladenosine(37) in tRNA + diphosphate. Its function is as follows. Catalyzes the transfer of a dimethylallyl group onto the adenine at position 37 in tRNAs that read codons beginning with uridine, leading to the formation of N6-(dimethylallyl)adenosine (i(6)A). The protein is tRNA dimethylallyltransferase of Corynebacterium urealyticum (strain ATCC 43042 / DSM 7109).